We begin with the raw amino-acid sequence, 134 residues long: Large ribosomal subunit protein uL14 (134 aa).

This sequence belongs to the universal ribosomal protein uL14 family. In terms of assembly, part of the 50S ribosomal subunit. Forms a cluster with proteins L3 and L19. In the 70S ribosome, L14 and L19 interact and together make contacts with the 16S rRNA in bridges B5 and B8.

Functionally, binds to 23S rRNA. Forms part of two intersubunit bridges in the 70S ribosome. The chain is Large ribosomal subunit protein uL14 from Deinococcus geothermalis (strain DSM 11300 / CIP 105573 / AG-3a).